An 86-amino-acid chain; its full sequence is DNA-directed RNA polymerase subunit omega (86 aa).

This sequence belongs to the RNA polymerase subunit omega family. In terms of assembly, the RNAP catalytic core consists of 2 alpha, 1 beta, 1 beta' and 1 omega subunit. When a sigma factor is associated with the core the holoenzyme is formed, which can initiate transcription.

It catalyses the reaction RNA(n) + a ribonucleoside 5'-triphosphate = RNA(n+1) + diphosphate. Its function is as follows. Promotes RNA polymerase assembly. Latches the N- and C-terminal regions of the beta' subunit thereby facilitating its interaction with the beta and alpha subunits. In Psychrobacter sp. (strain PRwf-1), this protein is DNA-directed RNA polymerase subunit omega.